We begin with the raw amino-acid sequence, 305 residues long: Cyclin-dependent kinase 3 (305 aa).

Residues 4-286 (FQKVEKIGEG…AKTALAHPYF (283 aa)) enclose the Protein kinase domain. ATP-binding positions include 10 to 18 (IGEGTYGVV) and lysine 33. The Proton acceptor role is filled by aspartate 127.

This sequence belongs to the protein kinase superfamily. CMGC Ser/Thr protein kinase family. CDC2/CDKX subfamily. Interacts with CABLES1 and CABLES2. Interacts with ATF1. Binding to CCNC/cyclin-C promotes RB1 phosphorylation. As to expression, expressed in cancer cell lines and glioblastoma tissue.

The enzyme catalyses L-seryl-[protein] + ATP = O-phospho-L-seryl-[protein] + ADP + H(+). It catalyses the reaction L-threonyl-[protein] + ATP = O-phospho-L-threonyl-[protein] + ADP + H(+). Serine/threonine-protein kinase that plays a critical role in the control of the eukaryotic cell cycle; involved in G0-G1 and G1-S cell cycle transitions. Interacts with CCNC/cyclin-C during interphase. Phosphorylates histone H1, ATF1, RB1 and CABLES1. ATF1 phosphorylation triggers ATF1 transactivation and transcriptional activities, and promotes cell proliferation and transformation. CDK3/cyclin-C mediated RB1 phosphorylation is required for G0-G1 transition. Promotes G1-S transition probably by contributing to the activation of E2F1, E2F2 and E2F3 in a RB1-independent manner. The protein is Cyclin-dependent kinase 3 (CDK3) of Homo sapiens (Human).